The chain runs to 429 residues: Small ribosomal subunit protein mS47 (429 aa).

Substrate is bound by residues Glu141, Gly166, Glu189, and Asp197.

This sequence belongs to the enoyl-CoA hydratase/isomerase family. Mitochondrion-specific ribosomal protein mS47 subfamily. In terms of assembly, component of the mitochondrial small ribosomal subunit (mt-SSU). Mature yeast 74S mitochondrial ribosomes consist of a small (37S) and a large (54S) subunit. The 37S small subunit contains a 15S ribosomal RNA (15S mt-rRNA) and at least 32 different proteins. The 54S large subunit contains a 21S rRNA (21S mt-rRNA) and at least 45 different proteins. mS47/snr1 forms a protuberance of the yeast mitoribosome and retains a solvent-exposed cavity likely capable of accommodating a substrate, in accordance with it being an active enzyme as well as an integral constituent of the mitoribosome.

It localises to the mitochondrion. It carries out the reaction 3-hydroxy-2-methylpropanoyl-CoA + H2O = 3-hydroxy-2-methylpropanoate + CoA + H(+). It functions in the pathway amino-acid degradation; L-valine degradation. Component of the mitochondrial ribosome (mitoribosome), a dedicated translation machinery responsible for the synthesis of mitochondrial genome-encoded proteins, including at least some of the essential transmembrane subunits of the mitochondrial respiratory chain. The mitoribosomes are attached to the mitochondrial inner membrane and translation products are cotranslationally integrated into the membrane. mS47/snr1 has enzymatic activity in vitro, and is able to catalyze the specific hydrolysis of 3-hydroxyisobutyryl-CoA (HIBYL-CoA). However, because the turnover rate of mS47/snr1 is only a fraction of that of the homologous mammalian enzyme, the physiological function of this activity remains unclear. Has an indirect role in endocytic membrane trafficking. The protein is Small ribosomal subunit protein mS47 (snr1) of Schizosaccharomyces pombe (strain 972 / ATCC 24843) (Fission yeast).